Here is a 330-residue protein sequence, read N- to C-terminus: tRNA-modifying protein YgfZ (330 aa).

Folate is bound by residues W28 and W190.

Belongs to the tRNA-modifying YgfZ family.

The protein localises to the cytoplasm. In terms of biological role, folate-binding protein involved in regulating the level of ATP-DnaA and in the modification of some tRNAs. It is probably a key factor in regulatory networks that act via tRNA modification, such as initiation of chromosomal replication. In Yersinia pseudotuberculosis serotype O:1b (strain IP 31758), this protein is tRNA-modifying protein YgfZ.